The chain runs to 130 residues: Flagellar assembly factor FliW (130 aa).

The protein belongs to the FliW family. In terms of assembly, interacts with translational regulator CsrA and flagellin(s).

It is found in the cytoplasm. Acts as an anti-CsrA protein, binds CsrA and prevents it from repressing translation of its target genes, one of which is flagellin. Binds to flagellin and participates in the assembly of the flagellum. The polypeptide is Flagellar assembly factor FliW (Clostridioides difficile (strain 630) (Peptoclostridium difficile)).